We begin with the raw amino-acid sequence, 623 residues long: UvrABC system protein C (623 aa).

Residues 13–92 form the GIY-YIG domain; the sequence is DKPGVYIMKN…IKKYKPRYNI (80 aa). The 36-residue stretch at 204-239 folds into the UVR domain; sequence NDIIRELKEEMEKASMNLDFEKAADLRDKMLAAQKV.

It belongs to the UvrC family. In terms of assembly, interacts with UvrB in an incision complex.

It is found in the cytoplasm. The UvrABC repair system catalyzes the recognition and processing of DNA lesions. UvrC both incises the 5' and 3' sides of the lesion. The N-terminal half is responsible for the 3' incision and the C-terminal half is responsible for the 5' incision. The polypeptide is UvrABC system protein C (Clostridium acetobutylicum (strain ATCC 824 / DSM 792 / JCM 1419 / IAM 19013 / LMG 5710 / NBRC 13948 / NRRL B-527 / VKM B-1787 / 2291 / W)).